A 740-amino-acid chain; its full sequence is Catalase-peroxidase (740 aa).

Positions 1-32 (MPEDRPIEDSPPIGEAQTDAPAGGCPAGFGRI) are disordered. A cross-link (tryptophyl-tyrosyl-methioninium (Trp-Tyr) (with M-263)) is located at residues 113-237 (WHAAGTYRVS…LAAVQMGLIY (125 aa)). Histidine 114 acts as the Proton acceptor in catalysis. Residues 237-263 (YVNPEGPNGNPDPQASAIDIRETFGRM) constitute a cross-link (tryptophyl-tyrosyl-methioninium (Tyr-Met) (with W-113)). Position 278 (histidine 278) interacts with heme b.

Belongs to the peroxidase family. Peroxidase/catalase subfamily. Homodimer or homotetramer. The cofactor is heme b. In terms of processing, formation of the three residue Trp-Tyr-Met cross-link is important for the catalase, but not the peroxidase activity of the enzyme.

It carries out the reaction H2O2 + AH2 = A + 2 H2O. The catalysed reaction is 2 H2O2 = O2 + 2 H2O. Functionally, bifunctional enzyme with both catalase and broad-spectrum peroxidase activity. May play a role in the intracellular survival of mycobacteria. The sequence is that of Catalase-peroxidase from Mycolicibacterium smegmatis (Mycobacterium smegmatis).